A 513-amino-acid chain; its full sequence is ATP synthase subunit alpha (513 aa).

169–176 contributes to the ATP binding site; sequence GDRQTGKT.

This sequence belongs to the ATPase alpha/beta chains family. F-type ATPases have 2 components, CF(1) - the catalytic core - and CF(0) - the membrane proton channel. CF(1) has five subunits: alpha(3), beta(3), gamma(1), delta(1), epsilon(1). CF(0) has three main subunits: a(1), b(2) and c(9-12). The alpha and beta chains form an alternating ring which encloses part of the gamma chain. CF(1) is attached to CF(0) by a central stalk formed by the gamma and epsilon chains, while a peripheral stalk is formed by the delta and b chains.

It is found in the cell inner membrane. The catalysed reaction is ATP + H2O + 4 H(+)(in) = ADP + phosphate + 5 H(+)(out). Its function is as follows. Produces ATP from ADP in the presence of a proton gradient across the membrane. The alpha chain is a regulatory subunit. This is ATP synthase subunit alpha from Dichelobacter nodosus (strain VCS1703A).